The sequence spans 283 residues: Ribose-phosphate pyrophosphokinase (283 aa).

ATP contacts are provided by residues 34-36 (DGE) and 89-90 (RQ). Positions 120 and 159 each coordinate Mg(2+). The active site involves Lys-182. D-ribose 5-phosphate is bound by residues Arg-184 and Asp-208.

The protein belongs to the ribose-phosphate pyrophosphokinase family. Class III (archaeal) subfamily. Mg(2+) is required as a cofactor.

The protein localises to the cytoplasm. It catalyses the reaction D-ribose 5-phosphate + ATP = 5-phospho-alpha-D-ribose 1-diphosphate + AMP + H(+). It participates in metabolic intermediate biosynthesis; 5-phospho-alpha-D-ribose 1-diphosphate biosynthesis; 5-phospho-alpha-D-ribose 1-diphosphate from D-ribose 5-phosphate (route I): step 1/1. Involved in the biosynthesis of the central metabolite phospho-alpha-D-ribosyl-1-pyrophosphate (PRPP) via the transfer of pyrophosphoryl group from ATP to 1-hydroxyl of ribose-5-phosphate (Rib-5-P). The polypeptide is Ribose-phosphate pyrophosphokinase (Methanosarcina acetivorans (strain ATCC 35395 / DSM 2834 / JCM 12185 / C2A)).